A 286-amino-acid chain; its full sequence is Release factor glutamine methyltransferase (286 aa).

S-adenosyl-L-methionine-binding positions include 122–126 (GTGTG), Asp145, Trp173, and Asn188. Position 188–191 (188–191 (NPPY)) interacts with substrate.

This sequence belongs to the protein N5-glutamine methyltransferase family. PrmC subfamily.

The catalysed reaction is L-glutaminyl-[peptide chain release factor] + S-adenosyl-L-methionine = N(5)-methyl-L-glutaminyl-[peptide chain release factor] + S-adenosyl-L-homocysteine + H(+). Methylates the class 1 translation termination release factors RF1/PrfA and RF2/PrfB on the glutamine residue of the universally conserved GGQ motif. This Shewanella oneidensis (strain ATCC 700550 / JCM 31522 / CIP 106686 / LMG 19005 / NCIMB 14063 / MR-1) protein is Release factor glutamine methyltransferase.